A 98-amino-acid chain; its full sequence is Large ribosomal subunit protein uL23 (98 aa).

The protein belongs to the universal ribosomal protein uL23 family. Part of the 50S ribosomal subunit. Contacts protein L29, and trigger factor when it is bound to the ribosome.

Functionally, one of the early assembly proteins it binds 23S rRNA. One of the proteins that surrounds the polypeptide exit tunnel on the outside of the ribosome. Forms the main docking site for trigger factor binding to the ribosome. In Gluconacetobacter diazotrophicus (strain ATCC 49037 / DSM 5601 / CCUG 37298 / CIP 103539 / LMG 7603 / PAl5), this protein is Large ribosomal subunit protein uL23.